The chain runs to 475 residues: MQFSSYEDLRSRLVSHAITCEEVVRFYLERIENHRGDNIYITVFHDQALERARTLDRKLREGGNPGKLFGMPMAIKDNIAMKNCRLTCASKILENYESVYDATAVLRLEEADAIFLGKTNMDEFAMGSSNENSAFGNVPNPFDKTRVPGGSSGGSAAAVANGLALVALGSDTGGSVRQPAGFCDIVGLKPTYGRISRYGLVAFASSFDQIGVLGLNCDDVALVLGVMAGKDEGDATSSRHPVADYASEMATLSVDGLKIGVPKEYFPETLNPEVSRMVKGKLEELRAQGAELVPVTLPDSAYAIAAYYILVTAEASSNLARFDGARYGYRSEMSEDLAAMYVNSRTEGFGREVKRRIMLGTYVLSAGYYDTYYKKAQQVRRVFQDRYREALDKVDVIAGPTSPFPPFGIGDKTENPLEMYLADVFTVPASIVGMPAISVPLGFDSMNLPVGMHLICNFFEEGKLLGIARHMQRSL.

Catalysis depends on charge relay system residues Lys-76 and Ser-151. Ser-175 functions as the Acyl-ester intermediate in the catalytic mechanism.

The protein belongs to the amidase family. GatA subfamily. Heterotrimer of A, B and C subunits.

The catalysed reaction is L-glutamyl-tRNA(Gln) + L-glutamine + ATP + H2O = L-glutaminyl-tRNA(Gln) + L-glutamate + ADP + phosphate + H(+). Its function is as follows. Allows the formation of correctly charged Gln-tRNA(Gln) through the transamidation of misacylated Glu-tRNA(Gln) in organisms which lack glutaminyl-tRNA synthetase. The reaction takes place in the presence of glutamine and ATP through an activated gamma-phospho-Glu-tRNA(Gln). The polypeptide is Glutamyl-tRNA(Gln) amidotransferase subunit A (Pelodictyon phaeoclathratiforme (strain DSM 5477 / BU-1)).